The sequence spans 287 residues: Putative sugar uptake protein LJ_0170 (287 aa).

10 helical membrane passes run 4 to 23 (VYLFLPAIGWGLMPLVIASV), 28 to 50 (VYNQIVGTVAASFIFGAIVMAIM), 56 to 78 (WSLFLLSALGGACWVIGQVGQYI), 91 to 108 (ISTGLQLIGVPLVGVLAF), 118 to 137 (LYGFIGILVLIIGVVLTSFT), 150 to 169 (VSTIILLVLTSLGYITSSSI), 179 to 198 (SIFFGQTFGMLVAVFIYTLV), 211 to 230 (VQSGGAGILYAIAALAYILS), 240 to 259 (FVISQLCVVISTLGGLIFLH), and 266 to 285 (GLIFTIAGLILIIGGAMLTT).

Belongs to the GRP transporter (TC 2.A.7.5) family.

The protein resides in the cell membrane. The sequence is that of Putative sugar uptake protein LJ_0170 from Lactobacillus johnsonii (strain CNCM I-12250 / La1 / NCC 533).